Here is a 213-residue protein sequence, read N- to C-terminus: Penicillin-binding protein activator LpoB (213 aa).

A signal peptide spans 1–19 (MTKMSRYALITALAMFLAG). Residue C20 is the site of N-palmitoyl cysteine attachment. C20 carries the S-diacylglycerol cysteine lipid modification. The disordered stretch occupies residues 28–74 (PVEEVKPAPEQPAEPQQPVPTVPSVPTIPQQPGPIEHEDQTAPPAPH). Pro residues predominate over residues 36–50 (PEQPAEPQQPVPTVP).

Belongs to the LpoB family. Interacts with PBP1b.

The protein resides in the cell outer membrane. Functionally, regulator of peptidoglycan synthesis that is essential for the function of penicillin-binding protein 1B (PBP1b). The chain is Penicillin-binding protein activator LpoB from Escherichia coli O157:H7.